A 346-amino-acid polypeptide reads, in one-letter code: Histidinol-phosphate aminotransferase (346 aa).

Lys209 is modified (N6-(pyridoxal phosphate)lysine).

Belongs to the class-II pyridoxal-phosphate-dependent aminotransferase family. Histidinol-phosphate aminotransferase subfamily. As to quaternary structure, homodimer. Pyridoxal 5'-phosphate serves as cofactor.

The enzyme catalyses L-histidinol phosphate + 2-oxoglutarate = 3-(imidazol-4-yl)-2-oxopropyl phosphate + L-glutamate. Its pathway is amino-acid biosynthesis; L-histidine biosynthesis; L-histidine from 5-phospho-alpha-D-ribose 1-diphosphate: step 7/9. The chain is Histidinol-phosphate aminotransferase from Vibrio cholerae serotype O1 (strain ATCC 39315 / El Tor Inaba N16961).